Here is a 293-residue protein sequence, read N- to C-terminus: Glutamyl-Q tRNA(Asp) synthetase (293 aa).

L-glutamate contacts are provided by residues 8 to 12 and Glu44; that span reads RFAPT. The short motif at 11–21 is the 'HIGH' region element; sequence PTPSGYLHFGS. The Zn(2+) site is built by Cys100, Cys102, Tyr114, and Cys118. The L-glutamate site is built by Tyr171 and Arg189. The 'KMSKS' region signature appears at 227–231; the sequence is KLGKS. Lys230 lines the ATP pocket.

It belongs to the class-I aminoacyl-tRNA synthetase family. GluQ subfamily. Zn(2+) serves as cofactor.

Its function is as follows. Catalyzes the tRNA-independent activation of glutamate in presence of ATP and the subsequent transfer of glutamate onto a tRNA(Asp). Glutamate is transferred on the 2-amino-5-(4,5-dihydroxy-2-cyclopenten-1-yl) moiety of the queuosine in the wobble position of the QUC anticodon. This is Glutamyl-Q tRNA(Asp) synthetase from Pseudomonas aeruginosa (strain ATCC 15692 / DSM 22644 / CIP 104116 / JCM 14847 / LMG 12228 / 1C / PRS 101 / PAO1).